We begin with the raw amino-acid sequence, 830 residues long: Kinesin-like protein KIN-14B (830 aa).

Positions 56 to 97 (ENISDDNTESEAKVQKIQDELVSLNAQLKQITLQRREALNNY) form a coiled coil. The 323-residue stretch at 103-425 (NIRVFCRIRP…LGFATRVRSI (323 aa)) folds into the Kinesin motor domain. 182-189 (GQTGSGKT) provides a ligand contact to ATP. Positions 434 to 476 (EMKARKETLLIDLGQKVNDLEHECEDIRRKIKNLEESMEHLTG) form a coiled coil.

It belongs to the TRAFAC class myosin-kinesin ATPase superfamily. Kinesin family. KIN-14 subfamily.

The protein is Kinesin-like protein KIN-14B of Oryza sativa subsp. japonica (Rice).